The chain runs to 131 residues: Small ribosomal subunit protein uS8 (131 aa).

The protein belongs to the universal ribosomal protein uS8 family. As to quaternary structure, part of the 30S ribosomal subunit. Contacts proteins S5 and S12.

Functionally, one of the primary rRNA binding proteins, it binds directly to 16S rRNA central domain where it helps coordinate assembly of the platform of the 30S subunit. The protein is Small ribosomal subunit protein uS8 of Bordetella avium (strain 197N).